Here is a 549-residue protein sequence, read N- to C-terminus: Hydroxylamine reductase (549 aa).

[4Fe-4S] cluster contacts are provided by Cys-5, Cys-8, Cys-17, and Cys-23. The hybrid [4Fe-2O-2S] cluster site is built by His-242, Glu-266, Cys-310, Cys-402, Cys-430, Cys-455, Glu-490, and Lys-492. Cys-402 bears the Cysteine persulfide mark.

Belongs to the HCP family. [4Fe-4S] cluster serves as cofactor. The cofactor is hybrid [4Fe-2O-2S] cluster.

The protein localises to the cytoplasm. The catalysed reaction is A + NH4(+) + H2O = hydroxylamine + AH2 + H(+). Functionally, catalyzes the reduction of hydroxylamine to form NH(3) and H(2)O. The chain is Hydroxylamine reductase from Clostridium novyi (strain NT).